A 599-amino-acid chain; its full sequence is MSSSSSHNSFSGSKTNAAEGQNSIDGLSLKKTTSPFILTAYPSNEEKEVKETDIVPDENKVNELDVHKQSTEFSKQESASNDDDTNIQLIPENNMKIVVPALILTLFLAALDNTIVTTALPTIAEDFNDTSSSSWIGSAYVLASNAVLPAVGVFCNILGRKIVLYICIFFFMLGSALCGASQNMIWLIVCRAIQGLGGGGIISLVNIIISDITPLRTRPMYSGILATAWGAALVAGPIIGGAICQRTTWRWIFFINLPSGGIATALIVVFLHLLPCERTSFKKFLKTFDFIGLVCVITGIVLILLGISLGASSGKWRRANILCYLIIGGCLFVFAFIYDTFTKRNAVLPPPFFKNRSSAALLACSSFFYLNYMLFAYYVPQYFQRIRGDNPIMSGVHTIPCAAVLCFFCTTVGMVLRKLGRYLPLIYVGYISCVAGMGAMICVNATTSMSKVMGLTTIFMFGSGFLFLPPLIAMQATFPPAMTSMATATLMFIRTMGGSIGITVGEVIFNERVTQSFDGNTTYAQLSYKQVERLPQELQIRVKNTYASAFRVIWIFCTVVMAIGFASIFFIKSRPLISNAQSVPAKKKGDSDEKPAEKV.

Residues Met-1 to Ser-13 are compositionally biased toward low complexity. Disordered stretches follow at residues Met-1–Leu-27 and Tyr-41–Asn-86. Residues Lys-14–Leu-27 are compositionally biased toward polar residues. The span at Asn-44 to Ser-70 shows a compositional bias: basic and acidic residues. Helical transmembrane passes span Ile-97–Thr-117, Trp-135–Cys-155, Ile-162–Gln-182, Ala-192–Ile-212, Gly-223–Ile-243, Trp-251–Leu-271, Phe-290–Gly-310, Ile-321–Phe-341, Ala-359–Val-379, Val-396–Leu-416, Leu-423–Val-443, Val-452–Ile-472, Thr-489–Phe-509, and Val-552–Lys-572.

It belongs to the major facilitator superfamily. TCR/Tet family.

Its subcellular location is the membrane. This is an uncharacterized protein from Schizosaccharomyces pombe (strain 972 / ATCC 24843) (Fission yeast).